Consider the following 1299-residue polypeptide: Tubulin polyglutamylase TTLL5 (1299 aa).

The TTL domain occupies 62-407 (RYHLSYKIVR…VCQDPAQRAS (346 aa)). ATP-binding positions include lysine 180, 186–187 (RG), 208–211 (SRYI), and 221–223 (KFD). A protein is bound at residue arginine 186. Arginine 247 contacts L-glutamate. 268-269 (TN) provides a ligand contact to ATP. The L-glutamate site is built by tyrosine 270, serine 271, and lysine 293. The Mg(2+) site is built by aspartate 353, glutamate 366, and asparagine 368. The segment at 378–488 (PLDLKIKASM…RGGFIRIFPT (111 aa)) is c-MTBD region. Lysine 384 lines the L-glutamate pocket. Disordered stretches follow at residues 589 to 626 (EMNV…FLRE), 832 to 853 (GTHS…KGDH), 918 to 941 (SSVT…IPSA), 1088 to 1130 (RSSA…RSLQ), and 1217 to 1275 (SSAT…QLNG). Over residues 597-617 (ESEEEEEVALDNEEEEQEASQ) the composition is skewed to acidic residues. Residues 838 to 847 (SKNNNSYSDS) show a composition bias toward low complexity. Composition is skewed to polar residues over residues 1104–1130 (SGPT…RSLQ), 1217–1230 (SSAT…TTLP), and 1258–1275 (ATSQ…QLNG).

Belongs to the tubulin--tyrosine ligase family. Interacts with the transcriptional coactivators NCOA1/SRC-1 and NCOA2/TIF2. It depends on Mg(2+) as a cofactor.

The protein localises to the cell projection. Its subcellular location is the cilium. It localises to the cytoplasm. The protein resides in the cytoskeleton. It is found in the cilium basal body. The protein localises to the nucleus. The enzyme catalyses L-glutamyl-[protein] + L-glutamate + ATP = gamma-L-glutamyl-L-glutamyl-[protein] + ADP + phosphate + H(+). The catalysed reaction is (L-glutamyl)(n)-gamma-L-glutamyl-L-glutamyl-[protein] + L-glutamate + ATP = (L-glutamyl)(n+1)-gamma-L-glutamyl-L-glutamyl-[protein] + ADP + phosphate + H(+). Its function is as follows. Polyglutamylase which modifies tubulin, generating polyglutamate side chains on the gamma-carboxyl group of specific glutamate residues within the C-terminal tail of tubulin. Preferentially mediates ATP-dependent initiation step of the polyglutamylation reaction over the elongation step. Preferentially modifies the alpha-tubulin tail over a beta-tail. Required for CCSAP localization to both polyglutamylated spindle and cilia microtubules. Increases the effects of transcriptional coactivator NCOA2/TIF2 in glucocorticoid receptor-mediated repression and induction and in androgen receptor-mediated induction. The sequence is that of Tubulin polyglutamylase TTLL5 (TTLL5) from Pongo abelii (Sumatran orangutan).